The chain runs to 387 residues: MGFLFTSESVNEGHPDKLADQISDGILDACLAQDPDSKVACETATKTNMVMVFGEITTKAKVDYEAVVRQVCRDVGFISDETGLDGNKCRVLVELHDQSPDIGQGVHGMGTKSDEDIGAGDQGHMFGYATDETPELMPLTHVLATKLGHRLTVVRKDGTCPWVLPDGKTQVTIEYENEGGAMVPKRVHTILISTQHIEGVTNEKIAEDLMNEVIKKVVPEKYLDADTIFHLNPSGRFVIGGPHGDAGLTGRKIIIDTYGGWGAHGGGAFSGKDPTKVDRSGAYISRQAAKSVVAAGLARRCLFQISYAIGVAEPLSVHVDTYGTGKIPDSEILAKVKAAFDFRPGMMGKALDLKRGGNKRYQTTAAYGHFGRDEDLDIFTWEKVVPL.

Residue Glu8 participates in Mg(2+) binding. Residue His14 coordinates ATP. Glu42 provides a ligand contact to K(+). L-methionine-binding residues include Glu55 and Gln98. ATP-binding positions include 166–168, 234–237, Asp245, 251–252, Ala268, Lys272, and Lys276; these read DGK, SGRF, and RK. Asp245 contributes to the L-methionine binding site. An L-methionine-binding site is contributed by Lys276.

It belongs to the AdoMet synthase family. Homotetramer. Requires Mn(2+) as cofactor. Mg(2+) serves as cofactor. The cofactor is Co(2+). K(+) is required as a cofactor.

It is found in the cytoplasm. The enzyme catalyses L-methionine + ATP + H2O = S-adenosyl-L-methionine + phosphate + diphosphate. It functions in the pathway amino-acid biosynthesis; S-adenosyl-L-methionine biosynthesis; S-adenosyl-L-methionine from L-methionine: step 1/1. Catalyzes the formation of S-adenosylmethionine from methionine and ATP. The reaction comprises two steps that are both catalyzed by the same enzyme: formation of S-adenosylmethionine (AdoMet) and triphosphate, and subsequent hydrolysis of the triphosphate. The sequence is that of S-adenosylmethionine synthase (METK-1) from Ostreococcus lucimarinus (strain CCE9901).